We begin with the raw amino-acid sequence, 281 residues long: Aspartate/glutamate leucyltransferase (281 aa).

This sequence belongs to the R-transferase family. Bpt subfamily.

The protein resides in the cytoplasm. The catalysed reaction is N-terminal L-glutamyl-[protein] + L-leucyl-tRNA(Leu) = N-terminal L-leucyl-L-glutamyl-[protein] + tRNA(Leu) + H(+). It carries out the reaction N-terminal L-aspartyl-[protein] + L-leucyl-tRNA(Leu) = N-terminal L-leucyl-L-aspartyl-[protein] + tRNA(Leu) + H(+). Functions in the N-end rule pathway of protein degradation where it conjugates Leu from its aminoacyl-tRNA to the N-termini of proteins containing an N-terminal aspartate or glutamate. The protein is Aspartate/glutamate leucyltransferase of Paracoccus denitrificans (strain Pd 1222).